The sequence spans 228 residues: Thymidylate kinase (228 aa).

20–27 (GGEGSGKS) is an ATP binding site.

The protein belongs to the thymidylate kinase family.

The catalysed reaction is dTMP + ATP = dTDP + ADP. Functionally, phosphorylation of dTMP to form dTDP in both de novo and salvage pathways of dTTP synthesis. This chain is Thymidylate kinase, found in Afipia carboxidovorans (strain ATCC 49405 / DSM 1227 / KCTC 32145 / OM5) (Oligotropha carboxidovorans).